A 625-amino-acid polypeptide reads, in one-letter code: 1,4-alpha-glucan branching enzyme GlgB (625 aa).

Residue Asp302 is the Nucleophile of the active site. Glu355 serves as the catalytic Proton donor.

This sequence belongs to the glycosyl hydrolase 13 family. GlgB subfamily. Monomer.

It carries out the reaction Transfers a segment of a (1-&gt;4)-alpha-D-glucan chain to a primary hydroxy group in a similar glucan chain.. The protein operates within glycan biosynthesis; glycogen biosynthesis. Functionally, catalyzes the formation of the alpha-1,6-glucosidic linkages in glycogen by scission of a 1,4-alpha-linked oligosaccharide from growing alpha-1,4-glucan chains and the subsequent attachment of the oligosaccharide to the alpha-1,6 position. In Albidiferax ferrireducens (strain ATCC BAA-621 / DSM 15236 / T118) (Rhodoferax ferrireducens), this protein is 1,4-alpha-glucan branching enzyme GlgB.